Reading from the N-terminus, the 392-residue chain is Flagellar P-ring protein (392 aa).

The first 38 residues, 1–38 (MKPFARRALLTAEPIRALLLAASLLAATLGLMPAEAFG), serve as a signal peptide directing secretion.

Belongs to the FlgI family. In terms of assembly, the basal body constitutes a major portion of the flagellar organelle and consists of four rings (L,P,S, and M) mounted on a central rod.

It is found in the periplasm. The protein resides in the bacterial flagellum basal body. In terms of biological role, assembles around the rod to form the L-ring and probably protects the motor/basal body from shearing forces during rotation. This Paramagnetospirillum magneticum (strain ATCC 700264 / AMB-1) (Magnetospirillum magneticum) protein is Flagellar P-ring protein.